Consider the following 95-residue polypeptide: Aspartyl/glutamyl-tRNA(Asn/Gln) amidotransferase subunit C (95 aa).

Belongs to the GatC family. As to quaternary structure, heterotrimer of A, B and C subunits.

The catalysed reaction is L-glutamyl-tRNA(Gln) + L-glutamine + ATP + H2O = L-glutaminyl-tRNA(Gln) + L-glutamate + ADP + phosphate + H(+). It catalyses the reaction L-aspartyl-tRNA(Asn) + L-glutamine + ATP + H2O = L-asparaginyl-tRNA(Asn) + L-glutamate + ADP + phosphate + 2 H(+). Its function is as follows. Allows the formation of correctly charged Asn-tRNA(Asn) or Gln-tRNA(Gln) through the transamidation of misacylated Asp-tRNA(Asn) or Glu-tRNA(Gln) in organisms which lack either or both of asparaginyl-tRNA or glutaminyl-tRNA synthetases. The reaction takes place in the presence of glutamine and ATP through an activated phospho-Asp-tRNA(Asn) or phospho-Glu-tRNA(Gln). This chain is Aspartyl/glutamyl-tRNA(Asn/Gln) amidotransferase subunit C, found in Chelativorans sp. (strain BNC1).